Here is a 454-residue protein sequence, read N- to C-terminus: Guanine deaminase (454 aa).

2 residues coordinate Zn(2+): histidine 82 and histidine 84. Substrate-binding positions include 84–87 (HASQ), 213–214 (RF), 240–243 (HISE), and aspartate 330. Residues histidine 240 and aspartate 330 each contribute to the Zn(2+) site. Serine 453 is subject to Phosphoserine.

It belongs to the metallo-dependent hydrolases superfamily. ATZ/TRZ family. Homodimer. Requires Zn(2+) as cofactor.

It carries out the reaction guanine + H2O + H(+) = xanthine + NH4(+). Its pathway is purine metabolism; guanine degradation; xanthine from guanine: step 1/1. Its function is as follows. Catalyzes the hydrolytic deamination of guanine, producing xanthine and ammonia. This is Guanine deaminase (GDA) from Pongo abelii (Sumatran orangutan).